The primary structure comprises 118 residues: Large ribosomal subunit protein bL20 (118 aa).

This sequence belongs to the bacterial ribosomal protein bL20 family.

Binds directly to 23S ribosomal RNA and is necessary for the in vitro assembly process of the 50S ribosomal subunit. It is not involved in the protein synthesizing functions of that subunit. This Shewanella baltica (strain OS223) protein is Large ribosomal subunit protein bL20.